The chain runs to 379 residues: 8-amino-7-oxononanoate synthase (379 aa).

Positions 27 and 34 each coordinate substrate. Pyridoxal 5'-phosphate is bound at residue 114-115 (GY). Substrate is bound at residue histidine 139. Pyridoxal 5'-phosphate is bound by residues serine 187, 212-215 (DDAH), and 232-235 (TLSK). The residue at position 235 (lysine 235) is an N6-(pyridoxal phosphate)lysine. Threonine 344 provides a ligand contact to substrate.

The protein belongs to the class-II pyridoxal-phosphate-dependent aminotransferase family. BioF subfamily. In terms of assembly, homodimer. The cofactor is pyridoxal 5'-phosphate.

The catalysed reaction is 6-carboxyhexanoyl-[ACP] + L-alanine + H(+) = (8S)-8-amino-7-oxononanoate + holo-[ACP] + CO2. Its pathway is cofactor biosynthesis; biotin biosynthesis. Catalyzes the decarboxylative condensation of pimeloyl-[acyl-carrier protein] and L-alanine to produce 8-amino-7-oxononanoate (AON), [acyl-carrier protein], and carbon dioxide. The sequence is that of 8-amino-7-oxononanoate synthase from Methylobacterium nodulans (strain LMG 21967 / CNCM I-2342 / ORS 2060).